A 323-amino-acid polypeptide reads, in one-letter code: tRNA U34 carboxymethyltransferase (323 aa).

Residues Lys-90, Trp-104, Lys-109, Gly-129, 182-183 (IE), Met-197, Tyr-201, and Arg-316 each bind carboxy-S-adenosyl-L-methionine.

The protein belongs to the class I-like SAM-binding methyltransferase superfamily. CmoB family. As to quaternary structure, homotetramer.

It catalyses the reaction carboxy-S-adenosyl-L-methionine + 5-hydroxyuridine(34) in tRNA = 5-carboxymethoxyuridine(34) in tRNA + S-adenosyl-L-homocysteine + H(+). In terms of biological role, catalyzes carboxymethyl transfer from carboxy-S-adenosyl-L-methionine (Cx-SAM) to 5-hydroxyuridine (ho5U) to form 5-carboxymethoxyuridine (cmo5U) at position 34 in tRNAs. This chain is tRNA U34 carboxymethyltransferase, found in Idiomarina loihiensis (strain ATCC BAA-735 / DSM 15497 / L2-TR).